Consider the following 432-residue polypeptide: Trigger factor (432 aa).

One can recognise a PPIase FKBP-type domain in the interval 161 to 246; that stretch reads DDRVTIDFVG…LKKIENMVLP (86 aa).

The protein belongs to the FKBP-type PPIase family. Tig subfamily.

It localises to the cytoplasm. It carries out the reaction [protein]-peptidylproline (omega=180) = [protein]-peptidylproline (omega=0). Functionally, involved in protein export. Acts as a chaperone by maintaining the newly synthesized protein in an open conformation. Functions as a peptidyl-prolyl cis-trans isomerase. In Haemophilus influenzae (strain PittEE), this protein is Trigger factor.